The sequence spans 391 residues: ATP-sensitive inward rectifier potassium channel 1 (391 aa).

The Cytoplasmic portion of the chain corresponds to 1–77 (MNASSRNVFD…IWTTVLDLKW (77 aa)). Position 44 is a phosphoserine; by SGK1 (Ser-44). A helical membrane pass occupies residues 78–102 (RYKMTIFITAFLGSWFFFGLLWYAV). At 103 to 127 (AYIHKDLPEFHPSANHTPCVENING) the chain is on the extracellular side. N-linked (GlcNAc...) asparagine glycosylation occurs at Asn-117. An intramembrane region (helical; Pore-forming) is located at residues 128–139 (LTSAFLFSLETQ). An intramembrane region (pore-forming) is located at residues 140 to 146 (VTIGYGF). The short motif at 141 to 146 (TIGYGF) is the Selectivity filter element. At 147-155 (RCVTEQCAT) the chain is on the extracellular side. The chain crosses the membrane as a helical span at residues 156–177 (AIFLLIFQSILGVIINSFMCGA). Residues 178–391 (ILAKISRPKK…EVNETDDTKM (214 aa)) lie on the Cytoplasmic side of the membrane. Residues 180–207 (AKISRPKKRAKTITFSKNAVISKRGGKL) are polyphosphoinositide (PIP2)-binding. 223–230 (GSHIYGKL) is a binding site for ATP.

This sequence belongs to the inward rectifier-type potassium channel (TC 1.A.2.1) family. KCNJ1 subfamily. As to quaternary structure, interacts with SGK1 and SLC9A3R2/NHERF2. In terms of processing, phosphorylation at Ser-44 by SGK1 is necessary for its expression at the cell membrane. As to expression, in the kidney and pancreatic islets. Lower levels in skeletal muscle, pancreas, spleen, brain, heart and liver.

Its subcellular location is the cell membrane. It catalyses the reaction K(+)(in) = K(+)(out). Inhibited by WNK3. Activated by phosphatidylinositol 4,5 biphosphate (PtdIns(4,5)P2). Its function is as follows. Inward rectifier potassium channels are characterized by a greater tendency to allow potassium to flow into the cell rather than out of it. Their voltage dependence is regulated by the concentration of extracellular potassium; as external potassium is raised, the voltage range of the channel opening shifts to more positive voltages. The inward rectification is mainly due to the blockage of outward current by internal magnesium. This channel is activated by internal ATP and can be blocked by external barium. In the kidney, probably plays a major role in potassium homeostasis. This Homo sapiens (Human) protein is ATP-sensitive inward rectifier potassium channel 1 (KCNJ1).